A 608-amino-acid chain; its full sequence is Zinc finger protein 652 (608 aa).

At Ser-57 the chain carries Phosphoserine. Residues Val-61–Pro-232 form a disordered region. Positions His-71–Arg-97 are enriched in basic and acidic residues. Acidic residues-rich tracts occupy residues Glu-98–Glu-108 and Glu-151–Thr-162. Position 100 is a phosphoserine (Ser-100). Position 103 is a phosphothreonine (Thr-103). The span at Ala-194–Thr-208 shows a compositional bias: low complexity. Phosphoserine occurs at positions 196 and 203. Residues Leu-244 to His-267 form a C2H2-type 1 zinc finger. Residues Gln-271–Asp-293 form a C2H2-type 2; degenerate zinc finger. 6 consecutive C2H2-type zinc fingers follow at residues Ile-298–His-321, Phe-328–His-350, Phe-356–His-378, Phe-384–His-406, Phe-412–His-434, and Phe-440–His-462. The C2H2-type 9; degenerate zinc finger occupies Tyr-468–Phe-491. The tract at residues Val-497–His-608 is mediates interaction with CBFA2T3.

The protein belongs to the krueppel C2H2-type zinc-finger protein family. In terms of assembly, interacts with CBFA2T3.

It localises to the nucleus. In terms of biological role, functions as a transcriptional repressor. The polypeptide is Zinc finger protein 652 (Znf652) (Mus musculus (Mouse)).